The primary structure comprises 462 residues: Cysteine desulfurase, mitochondrial (462 aa).

Residues 132-133, asparagine 212, glutamine 240, and 260-262 contribute to the pyridoxal 5'-phosphate site; these read AT and SGH. Lysine 263 is modified (N6-(pyridoxal phosphate)lysine). Threonine 300 provides a ligand contact to pyridoxal 5'-phosphate. Catalysis depends on cysteine 386, which acts as the Cysteine persulfide intermediate. Cysteine 386 lines the [2Fe-2S] cluster pocket.

Belongs to the class-V pyridoxal-phosphate-dependent aminotransferase family. NifS/IscS subfamily. As to quaternary structure, component of the mitochondrial core iron-sulfur cluster (ISC) assembly complex at least composed of the cystein desulfurase Nfs1, the scaffold protein IscU, the accessory protein bcn92/Isd11/Lyrm4, and probably fh/frataxin. Interacts with bcn92/Isd11/Lyrm4 and IscU. Pyridoxal 5'-phosphate serves as cofactor. In terms of tissue distribution, ubiquitous expression at high levels in any life stage.

It localises to the mitochondrion. Its subcellular location is the nucleus. The enzyme catalyses (sulfur carrier)-H + L-cysteine = (sulfur carrier)-SH + L-alanine. Its activity is regulated as follows. Active when in complex with bcn92/Isd11/Lyrm4. L-cysteine binding kinetics are reduced in the presence of bcn92/Isd11/Lyrm4 and IscU. Activity is regulated by other components of the mitochondrial core iron-sulfur cluster (ISC) complex; Activity is reduced in the presence of IscU but enhanced when both IscU and fh/frataxin are present. Catalyzes the removal of elemental sulfur from cysteine to produce alanine. It supplies the inorganic sulfur for iron-sulfur (Fe-S) clusters. The sequence is that of Cysteine desulfurase, mitochondrial from Drosophila melanogaster (Fruit fly).